The following is a 316-amino-acid chain: 4-hydroxy-3-methylbut-2-enyl diphosphate reductase (316 aa).

Cysteine 12 is a [4Fe-4S] cluster binding site. The (2E)-4-hydroxy-3-methylbut-2-enyl diphosphate site is built by histidine 41 and histidine 74. Residues histidine 41 and histidine 74 each contribute to the dimethylallyl diphosphate site. Positions 41 and 74 each coordinate isopentenyl diphosphate. Cysteine 96 serves as a coordination point for [4Fe-4S] cluster. Position 124 (histidine 124) interacts with (2E)-4-hydroxy-3-methylbut-2-enyl diphosphate. Residue histidine 124 coordinates dimethylallyl diphosphate. Residue histidine 124 coordinates isopentenyl diphosphate. Glutamate 126 functions as the Proton donor in the catalytic mechanism. Threonine 169 is a (2E)-4-hydroxy-3-methylbut-2-enyl diphosphate binding site. Cysteine 199 lines the [4Fe-4S] cluster pocket. 4 residues coordinate (2E)-4-hydroxy-3-methylbut-2-enyl diphosphate: serine 227, serine 228, asparagine 229, and serine 271. The dimethylallyl diphosphate site is built by serine 227, serine 228, asparagine 229, and serine 271. 4 residues coordinate isopentenyl diphosphate: serine 227, serine 228, asparagine 229, and serine 271.

This sequence belongs to the IspH family. [4Fe-4S] cluster is required as a cofactor.

It carries out the reaction isopentenyl diphosphate + 2 oxidized [2Fe-2S]-[ferredoxin] + H2O = (2E)-4-hydroxy-3-methylbut-2-enyl diphosphate + 2 reduced [2Fe-2S]-[ferredoxin] + 2 H(+). The catalysed reaction is dimethylallyl diphosphate + 2 oxidized [2Fe-2S]-[ferredoxin] + H2O = (2E)-4-hydroxy-3-methylbut-2-enyl diphosphate + 2 reduced [2Fe-2S]-[ferredoxin] + 2 H(+). It participates in isoprenoid biosynthesis; dimethylallyl diphosphate biosynthesis; dimethylallyl diphosphate from (2E)-4-hydroxy-3-methylbutenyl diphosphate: step 1/1. It functions in the pathway isoprenoid biosynthesis; isopentenyl diphosphate biosynthesis via DXP pathway; isopentenyl diphosphate from 1-deoxy-D-xylulose 5-phosphate: step 6/6. Functionally, catalyzes the conversion of 1-hydroxy-2-methyl-2-(E)-butenyl 4-diphosphate (HMBPP) into a mixture of isopentenyl diphosphate (IPP) and dimethylallyl diphosphate (DMAPP). Acts in the terminal step of the DOXP/MEP pathway for isoprenoid precursor biosynthesis. The chain is 4-hydroxy-3-methylbut-2-enyl diphosphate reductase from Xanthomonas campestris pv. campestris (strain 8004).